The primary structure comprises 769 residues: Calcium up-regulated protein F (769 aa).

The disordered stretch occupies residues 1–21 (MINIKDISKSSNQSEEKSLKG). 2 Ricin B-type lectin domains span residues 25-145 (KTKY…WTTF) and 116-249 (QGNG…WGIN).

It belongs to the cup family.

The protein resides in the cytoplasm. The protein localises to the membrane. May play an important role in stabilizing and/or regulating the cell membrane during Ca(2+) stress or certain stages of development. The polypeptide is Calcium up-regulated protein F (cupF) (Dictyostelium discoideum (Social amoeba)).